Reading from the N-terminus, the 176-residue chain is NAD(P)H-quinone oxidoreductase subunit 6, chloroplastic (176 aa).

5 helical membrane passes run 10–30 (ILLV…VLFT), 32–52 (PIYS…FYIP), 61–81 (AQLL…VMFM), 90–112 (FHLW…FSLI), and 152–172 (FYLP…GAIA).

Belongs to the complex I subunit 6 family. In terms of assembly, NDH is composed of at least 16 different subunits, 5 of which are encoded in the nucleus.

Its subcellular location is the plastid. It localises to the chloroplast thylakoid membrane. The catalysed reaction is a plastoquinone + NADH + (n+1) H(+)(in) = a plastoquinol + NAD(+) + n H(+)(out). It catalyses the reaction a plastoquinone + NADPH + (n+1) H(+)(in) = a plastoquinol + NADP(+) + n H(+)(out). Its function is as follows. NDH shuttles electrons from NAD(P)H:plastoquinone, via FMN and iron-sulfur (Fe-S) centers, to quinones in the photosynthetic chain and possibly in a chloroplast respiratory chain. The immediate electron acceptor for the enzyme in this species is believed to be plastoquinone. Couples the redox reaction to proton translocation, and thus conserves the redox energy in a proton gradient. The chain is NAD(P)H-quinone oxidoreductase subunit 6, chloroplastic (ndhG) from Ceratophyllum demersum (Rigid hornwort).